A 38-amino-acid polypeptide reads, in one-letter code: Photosystem II reaction center protein M (38 aa).

Residues 7-27 (GFVASILFVLVPTVFLLILYI) form a helical membrane-spanning segment.

This sequence belongs to the PsbM family. PSII is composed of 1 copy each of membrane proteins PsbA, PsbB, PsbC, PsbD, PsbE, PsbF, PsbH, PsbI, PsbJ, PsbK, PsbL, PsbM, PsbT, PsbX, PsbY, PsbZ, Psb30/Ycf12, peripheral proteins PsbO, CyanoQ (PsbQ), PsbU, PsbV and a large number of cofactors. It forms dimeric complexes.

It is found in the cellular thylakoid membrane. In terms of biological role, one of the components of the core complex of photosystem II (PSII). PSII is a light-driven water:plastoquinone oxidoreductase that uses light energy to abstract electrons from H(2)O, generating O(2) and a proton gradient subsequently used for ATP formation. It consists of a core antenna complex that captures photons, and an electron transfer chain that converts photonic excitation into a charge separation. This subunit is found at the monomer-monomer interface. The protein is Photosystem II reaction center protein M of Nostoc punctiforme (strain ATCC 29133 / PCC 73102).